We begin with the raw amino-acid sequence, 150 residues long: Ribosome maturation factor RimP (150 aa).

It belongs to the RimP family.

It is found in the cytoplasm. Its function is as follows. Required for maturation of 30S ribosomal subunits. This chain is Ribosome maturation factor RimP, found in Klebsiella pneumoniae (strain 342).